Here is a 135-residue protein sequence, read N- to C-terminus: Small ribosomal subunit protein uS12 (135 aa).

The disordered stretch occupies residues 1 to 20 (MPTINQLVRKGRHSKVTKSK). The segment covering 9-18 (RKGRHSKVTK) has biased composition (basic residues). Aspartate 102 bears the 3-methylthioaspartic acid mark.

Belongs to the universal ribosomal protein uS12 family. As to quaternary structure, part of the 30S ribosomal subunit. Contacts proteins S8 and S17. May interact with IF1 in the 30S initiation complex.

With S4 and S5 plays an important role in translational accuracy. In terms of biological role, interacts with and stabilizes bases of the 16S rRNA that are involved in tRNA selection in the A site and with the mRNA backbone. Located at the interface of the 30S and 50S subunits, it traverses the body of the 30S subunit contacting proteins on the other side and probably holding the rRNA structure together. The combined cluster of proteins S8, S12 and S17 appears to hold together the shoulder and platform of the 30S subunit. This is Small ribosomal subunit protein uS12 from Lactobacillus helveticus (strain DPC 4571).